The following is a 444-amino-acid chain: Acyl-CoA 6-desaturase (444 aa).

Over 1 to 131 the chain is Cytoplasmic; that stretch reads MGKGGNQGEG…DMNLFKTNHV (131 aa). In terms of domain architecture, Cytochrome b5 heme-binding spans 18 to 95; it reads MPTFSWEEIQ…LKPLLIGELA (78 aa). A helical transmembrane segment spans residues 132–152; sequence FFLLLLAHIIALESIAWFTVF. Residues 153-157 lie on the Lumenal side of the membrane; that stretch reads YFGNG. Residues 158-178 traverse the membrane as a helical segment; sequence WIPTLITAFVLATSQAQAGWL. Over 179-264 the chain is Cytoplasmic; sequence QHDYGHLSVY…KYLPYNHQHE (86 aa). The short motif at 180–184 is the Histidine box-1 element; that stretch reads HDYGH. Positions 217–221 match the Histidine box-2 motif; it reads HFQHH. The helical transmembrane segment at 265 to 285 threads the bilayer; it reads YFFLIGPPLLIPMYFQYQIIM. Topologically, residues 286-305 are lumenal; the sequence is TMIVHKNWVDLAWAISYYIR. The chain crosses the membrane as a helical span at residues 306-326; that stretch reads FFVTYIPFYGILGALLFLNFI. Residues 327-444 are Cytoplasmic-facing; it reads RFLESHWFVW…KLWLDAYLHK (118 aa). The Histidine box-3 signature appears at 382 to 386; it reads QIEHH.

Belongs to the fatty acid desaturase type 1 family.

The protein localises to the endoplasmic reticulum membrane. It carries out the reaction (9Z,12Z)-octadecadienoyl-CoA + 2 Fe(II)-[cytochrome b5] + O2 + 2 H(+) = (6Z,9Z,12Z)-octadecatrienoyl-CoA + 2 Fe(III)-[cytochrome b5] + 2 H2O. It catalyses the reaction (9Z,12Z,15Z)-octadecatrienoyl-CoA + 2 Fe(II)-[cytochrome b5] + O2 + 2 H(+) = (6Z,9Z,12Z,15Z)-octadecatetraenoyl-CoA + 2 Fe(III)-[cytochrome b5] + 2 H2O. The enzyme catalyses (9Z,12Z,15Z,18Z,21Z)-tetracosapentaenoyl-CoA + 2 Fe(II)-[cytochrome b5] + O2 + 2 H(+) = (6Z,9Z,12Z,15Z,18Z,21Z)-tetracosahexaenoyl-CoA + 2 Fe(III)-[cytochrome b5] + 2 H2O. The catalysed reaction is (11E)-octadecenoyl-CoA + 2 Fe(II)-[cytochrome b5] + O2 + 2 H(+) = (6Z,11E)-octadecadienoyl-CoA + 2 Fe(III)-[cytochrome b5] + 2 H2O. It carries out the reaction (11Z,14Z)-eicosadienoyl-CoA + 2 Fe(II)-[cytochrome b5] + O2 + 2 H(+) = (8Z,11Z,14Z)-eicosatrienoyl-CoA + 2 Fe(III)-[cytochrome b5] + 2 H2O. It catalyses the reaction (11Z,14Z,17Z)-eicosatrienoyl-CoA + 2 Fe(II)-[cytochrome b5] + O2 + 2 H(+) = (8Z,11Z,14Z,17Z)-eicosatetraenoyl-CoA + 2 Fe(III)-[cytochrome b5] + 2 H2O. Its pathway is lipid metabolism; polyunsaturated fatty acid biosynthesis. Functionally, involved in the biosynthesis of highly unsaturated fatty acids (HUFA) from the essential polyunsaturated fatty acids (PUFA) linoleic acid (LA) (18:2n-6) and alpha-linolenic acid (ALA) (18:3n-3) precursors, acting as a fatty acyl-coenzyme A (CoA) desaturase that introduces a cis double bond at carbon 6 of the fatty acyl chain. Catalyzes the first and rate limiting step in this pathway which is the desaturation of LA (18:2n-6) and ALA (18:3n-3) into gamma-linoleate (GLA) (18:3n-6) and stearidonate (18:4n-3), respectively. Subsequently, in the biosynthetic pathway of HUFA n-3 series, it desaturates tetracosapentaenoate (24:5n-3) to tetracosahexaenoate (24:6n-3), which is then converted to docosahexaenoate (DHA)(22:6n-3), an important lipid for nervous system function. It can also desaturate (11E)-octadecenoate (trans-vaccenoate) at carbon 6 generating (6Z,11E)-octadecadienoate. In addition to Delta-6 activity, this enzyme exhibits Delta-8 activity with slight biases toward n-3 fatty acyl-CoA substrates. This chain is Acyl-CoA 6-desaturase (FADS2), found in Macaca fascicularis (Crab-eating macaque).